Consider the following 434-residue polypeptide: Serine hydroxymethyltransferase (434 aa).

Residues L133 and 137-139 (GHL) contribute to the (6S)-5,6,7,8-tetrahydrofolate site. K242 is subject to N6-(pyridoxal phosphate)lysine.

It belongs to the SHMT family. As to quaternary structure, homodimer. It depends on pyridoxal 5'-phosphate as a cofactor.

The protein resides in the cytoplasm. It catalyses the reaction (6R)-5,10-methylene-5,6,7,8-tetrahydrofolate + glycine + H2O = (6S)-5,6,7,8-tetrahydrofolate + L-serine. Its pathway is one-carbon metabolism; tetrahydrofolate interconversion. It participates in amino-acid biosynthesis; glycine biosynthesis; glycine from L-serine: step 1/1. Its function is as follows. Catalyzes the reversible interconversion of serine and glycine with tetrahydrofolate (THF) serving as the one-carbon carrier. This reaction serves as the major source of one-carbon groups required for the biosynthesis of purines, thymidylate, methionine, and other important biomolecules. Also exhibits THF-independent aldolase activity toward beta-hydroxyamino acids, producing glycine and aldehydes, via a retro-aldol mechanism. This chain is Serine hydroxymethyltransferase, found in Hyphomicrobium methylovorum.